Reading from the N-terminus, the 207-residue chain is Casparian strip membrane protein 1 (207 aa).

Polar residues predominate over residues 1–12 (MEGESTAVNITE). Positions 1–24 (MEGESTAVNITETPKERKGKAPLL) are disordered. The Cytoplasmic portion of the chain corresponds to 1–48 (MEGESTAVNITETPKERKGKAPLLAPPPASGGIKTIVQKAPKGGYKRG). The helical transmembrane segment at 49–69 (LAVFDVVLRIAGIAAALGAVI) threads the bilayer. Residues 70 to 98 (AMGSTDQTLPFFTQFFQFKAEFDDLPVFT) are Extracellular-facing. The chain crosses the membrane as a helical span at residues 99-119 (FFVIANAITAAYLALSIPISI). Topologically, residues 120-138 (VCIIRPHLVGPRVLLTFLD) are cytoplasmic. Residues 139 to 159 (TVMVGLTTAAAGGAASIVYLA) traverse the membrane as a helical segment. Residues 160–184 (HNGNSDANWPAICQQFNDFCQEVSG) are Extracellular-facing. Residues 185–205 (AVVASFITVVVLMFLIVLSAF) form a helical membrane-spanning segment. The Cytoplasmic segment spans residues 206 to 207 (SL).

The protein belongs to the Casparian strip membrane proteins (CASP) family. As to quaternary structure, homodimer and heterodimers.

The protein localises to the cell membrane. Functionally, regulates membrane-cell wall junctions and localized cell wall deposition. Required for establishment of the Casparian strip membrane domain (CSD) and the subsequent formation of Casparian strips, a cell wall modification of the root endodermis that determines an apoplastic barrier between the intraorganismal apoplasm and the extraorganismal apoplasm and prevents lateral diffusion. The sequence is that of Casparian strip membrane protein 1 from Taraxacum kok-saghyz (Russian dandelion).